A 362-amino-acid polypeptide reads, in one-letter code: 3-dehydroquinate synthase (362 aa).

NAD(+) contacts are provided by residues 71-76 (DGEQYK), 105-109 (GVIGD), 129-130 (TT), lysine 142, lysine 151, and 169-172 (CLQT). The Zn(2+) site is built by glutamate 184, histidine 247, and histidine 264.

Belongs to the sugar phosphate cyclases superfamily. Dehydroquinate synthase family. It depends on Co(2+) as a cofactor. Requires Zn(2+) as cofactor. NAD(+) is required as a cofactor.

Its subcellular location is the cytoplasm. It catalyses the reaction 7-phospho-2-dehydro-3-deoxy-D-arabino-heptonate = 3-dehydroquinate + phosphate. It participates in metabolic intermediate biosynthesis; chorismate biosynthesis; chorismate from D-erythrose 4-phosphate and phosphoenolpyruvate: step 2/7. Catalyzes the conversion of 3-deoxy-D-arabino-heptulosonate 7-phosphate (DAHP) to dehydroquinate (DHQ). The polypeptide is 3-dehydroquinate synthase (Cronobacter sakazakii (strain ATCC BAA-894) (Enterobacter sakazakii)).